A 221-amino-acid polypeptide reads, in one-letter code: Molybdenum cofactor guanylyltransferase (221 aa).

GTP contacts are provided by residues 18-20 (IAG), Lys-35, Asn-63, Asp-81, and Asp-112. Asp-112 contributes to the Mg(2+) binding site.

Belongs to the MobA family. Monomer. It depends on Mg(2+) as a cofactor.

It is found in the cytoplasm. It catalyses the reaction Mo-molybdopterin + GTP + H(+) = Mo-molybdopterin guanine dinucleotide + diphosphate. Transfers a GMP moiety from GTP to Mo-molybdopterin (Mo-MPT) cofactor (Moco or molybdenum cofactor) to form Mo-molybdopterin guanine dinucleotide (Mo-MGD) cofactor. This chain is Molybdenum cofactor guanylyltransferase, found in Brucella abortus (strain S19).